The chain runs to 203 residues: MSEHRIPVAADKKISPPISAGEQKGCKGLKRTDLMLRFAAFVCCTVTMVVLITDKQTSAIQVPGFNNLTITKTVSFDLAKAFVYLVSAAGIGAGYTLLVLVLSIISAERSKAIAWFIFVFDQLITYVLLAAAAASTEVAYMGAHAPPEASWLKVCSLFGRFCHQLGASLVTSLISTVLFAFSAAISAYYLFSNTNVRPAYSKG.

Residues 1–31 lie on the Cytoplasmic side of the membrane; it reads MSEHRIPVAADKKISPPISAGEQKGCKGLKR. Residues 32–52 traverse the membrane as a helical segment; that stretch reads TDLMLRFAAFVCCTVTMVVLI. The Extracellular portion of the chain corresponds to 53–84; the sequence is TDKQTSAIQVPGFNNLTITKTVSFDLAKAFVY. N-linked (GlcNAc...) asparagine glycosylation occurs at N67. Residues 85–105 form a helical membrane-spanning segment; it reads LVSAAGIGAGYTLLVLVLSII. Residues 106–111 lie on the Cytoplasmic side of the membrane; it reads SAERSK. Residues 112 to 132 form a helical membrane-spanning segment; that stretch reads AIAWFIFVFDQLITYVLLAAA. The Extracellular segment spans residues 133-164; that stretch reads AASTEVAYMGAHAPPEASWLKVCSLFGRFCHQ. Residues 165–185 form a helical membrane-spanning segment; that stretch reads LGASLVTSLISTVLFAFSAAI. The Cytoplasmic segment spans residues 186 to 203; that stretch reads SAYYLFSNTNVRPAYSKG.

It belongs to the Casparian strip membrane proteins (CASP) family. Homodimer and heterodimers.

It is found in the cell membrane. This Selaginella moellendorffii (Spikemoss) protein is CASP-like protein 2U6.